The chain runs to 96 residues: Aspartyl/glutamyl-tRNA(Asn/Gln) amidotransferase subunit C (96 aa).

Belongs to the GatC family. In terms of assembly, heterotrimer of A, B and C subunits.

The catalysed reaction is L-glutamyl-tRNA(Gln) + L-glutamine + ATP + H2O = L-glutaminyl-tRNA(Gln) + L-glutamate + ADP + phosphate + H(+). It catalyses the reaction L-aspartyl-tRNA(Asn) + L-glutamine + ATP + H2O = L-asparaginyl-tRNA(Asn) + L-glutamate + ADP + phosphate + 2 H(+). Functionally, allows the formation of correctly charged Asn-tRNA(Asn) or Gln-tRNA(Gln) through the transamidation of misacylated Asp-tRNA(Asn) or Glu-tRNA(Gln) in organisms which lack either or both of asparaginyl-tRNA or glutaminyl-tRNA synthetases. The reaction takes place in the presence of glutamine and ATP through an activated phospho-Asp-tRNA(Asn) or phospho-Glu-tRNA(Gln). The chain is Aspartyl/glutamyl-tRNA(Asn/Gln) amidotransferase subunit C from Symbiobacterium thermophilum (strain DSM 24528 / JCM 14929 / IAM 14863 / T).